The sequence spans 172 residues: Large ribosomal subunit protein uL10 (172 aa).

It belongs to the universal ribosomal protein uL10 family. In terms of assembly, part of the ribosomal stalk of the 50S ribosomal subunit. The N-terminus interacts with L11 and the large rRNA to form the base of the stalk. The C-terminus forms an elongated spine to which L12 dimers bind in a sequential fashion forming a multimeric L10(L12)X complex.

In terms of biological role, forms part of the ribosomal stalk, playing a central role in the interaction of the ribosome with GTP-bound translation factors. In Rhizobium rhizogenes (strain K84 / ATCC BAA-868) (Agrobacterium radiobacter), this protein is Large ribosomal subunit protein uL10.